Consider the following 1218-residue polypeptide: MSGSRVSDLSKLHLKKELTQIRKAGRVLRDPGTTSSWKSPLDSSRSVALLETPASRNGGSSSQFPIRGESSTNRRGKEKKVFLYNWKTQKSSSEKSGLAKNGKEEEEEEEDASSWTQASVNDDDDVSDARNGGDSYRREIQSASMGFRCRDTNLASQGVSKMRKSNVGSCKKKSKKKISSSRLDCLSKYQPRDDIVARNCNAGSDDTEEELSNSEDLRKVTGASPLLLKLKQKNWSRSSSRLLRANNRKEDSSCTYNSTPALSTSSYNMYAVRNPSTVGSWDGTTTSVNDGDDELDDNLDLPGRQGCGIPCYWTKKAMKHRGGCRSCCSPSFSDTLRRTGSSILCGSQSVYRRHNRHSSGGYSKQKIACRSAQGVLPLLSYGGDGRGGSSLGTGLSDDELSTNYGELDLEAQSRLDGRRWSTSYRSQDGLEAVALDGEEEEGSTPETIRSFSQKYRPMFFEELIGQSIVVQSLMNAVKRSRIAPVYLFQGPRGTGKTSTARIFSAALNCVATEEMKPCGYCKECNDFMSGKSKDFWELDGANKKGADKVRYLLKNLPTILPRNSSMYKVFVIDECHLLPSKTWLSFLKFLENPLQKVVFIFITTDLENVPRTIQSRCQKFLFDKLKDSDIVVRLKKIASDENLDVDLHALDLIAMNADGSLRDAETMLEQLSLLGKRITTALVNELVGVVSDEKLLELLELALSSDTAETVKRARELLDLGADPIVLMSQLASLIMDIIAGTYKVVDEKYSNAFFDGRNLTEADMEGLKHALKLLSEAEKQLRVSNDRSTWFTATLLQLGSMPSPGTTHTGSSRRQSSRATDDDPASVSREVMAYKQRIGGLHFSKSASPASVIKRNGNHSHEAKPFSRVIDNNCYKSSSSSQMIESEGSIASHENSIASTMMLNQRSSEKLNDIWRKCIERCHSKTLRQLLYTHGKLISISEVEGILVAYIAFGENDIKLRAERFLSSITNSIEMVLRRSVEVRIILLPETELLVVPHQTRKPEMTNKSGHLNNIAGLNAETDVEVGSSVESRSKLPMQRIESIIREQRLETAWLQTADKDTPGSIIRVKPERNQILPQEDTYRQTNVASAISSSGLTTHQWVDELNNEVKLLKIGDNGELQENLTGTRGQHCPLSPSLLHDTNFGNNKDNLGGYESGSGRVGCNILFCWNTKKTQRRSKSKQVKGTPVRSRRNRKSRFSLFNGCAKPRKAEGNIRR.

Residues 24–136 are disordered; the sequence is AGRVLRDPGT…SDARNGGDSY (113 aa). Polar residues-rich tracts occupy residues 32–46, 54–73, and 86–95; these read GTTSSWKSPLDSSRS, ASRNGGSSSQFPIRGESSTN, and WKTQKSSSEK. A Bipartite nuclear localization signal motif is present at residues 163-180; the sequence is RKSNVGSCKKKSKKKISS. 2 short sequence motifs (PEST) span residues 273–304 and 425–449; these read RNPSTVGSWDGTTTSVNDGDDELDDNLDLPGR and RSQDGLEAVALDGEEEEGSTPETIR. 490–497 provides a ligand contact to ATP; the sequence is GPRGTGKT. Zn(2+)-binding residues include C509, C518, C521, and C524. Residues 762–788 are a coiled coil; the sequence is EADMEGLKHALKLLSEAEKQLRVSNDR. The interval 802–828 is disordered; sequence MPSPGTTHTGSSRRQSSRATDDDPASV. Over residues 804–819 the composition is skewed to polar residues; sequence SPGTTHTGSSRRQSSR. Short sequence motifs (bipartite nuclear localization signal) lie at residues 1178–1195 and 1196–1213; these read RRSKSKQVKGTPVRSRRN and RKSRFSLFNGCAKPRKAE.

Belongs to the DnaX/STICHEL family. In terms of assembly, interacts with BLT. Ubiquitous.

It localises to the nucleus. In terms of biological role, acts as a key regulator of trichome branching through an endoreduplication-independent pathway. This Arabidopsis thaliana (Mouse-ear cress) protein is Protein STICHEL (STI).